Consider the following 176-residue polypeptide: PRL-1 phosphatase (176 aa).

One can recognise a Tyrosine-protein phosphatase domain in the interval 13–166 (APALIEYKGM…YKPKARLKHK (154 aa)). Residue cysteine 109 is the Phosphocysteine intermediate of the active site. A Cysteine methyl ester modification is found at cysteine 173. Cysteine 173 carries S-farnesyl cysteine lipidation. The propeptide at 174-176 (SVQ) is removed in mature form.

This sequence belongs to the protein-tyrosine phosphatase family. In terms of assembly, homotrimer. Interacts with uex, possibly at the plasma membrane. Expressed in the adult head (at protein level). Expressed in neurons in the antennal lobe and V-glomeruli (at protein level). Expressed in dorsocentral neurons (at protein level).

Its subcellular location is the cytoplasm. It is found in the cell membrane. It localises to the apicolateral cell membrane. The protein localises to the cell projection. The protein resides in the axon. The catalysed reaction is O-phospho-L-tyrosyl-[protein] + H2O = L-tyrosyl-[protein] + phosphate. In terms of biological role, probable phosphatase. Inhibits growth possibly by negatively regulating Src64B-induced growth. Regulates central nervous system circuit formation and stabilization of synapse-dense terminal arbors. In dorsocentral neurons, regulates synaptogenesis in terminal arbors via modulation of the insulin receptor pathway, likely upstream of Akt1, and via reduction of PtdIns(4,5)P2 (Phosphatidylinositol 4,5-bisphosphate) levels. In the nervous system, plays a protective role together with uex in response to olfactory carbon dioxide stimulation. The chain is PRL-1 phosphatase from Drosophila melanogaster (Fruit fly).